Here is a 153-residue protein sequence, read N- to C-terminus: Regulatory protein RecX (153 aa).

It belongs to the RecX family.

It is found in the cytoplasm. Its function is as follows. Modulates RecA activity. The sequence is that of Regulatory protein RecX from Neisseria meningitidis serogroup C / serotype 2a (strain ATCC 700532 / DSM 15464 / FAM18).